Here is a 58-residue protein sequence, read N- to C-terminus: UPF0391 membrane protein Patl_4137 (58 aa).

Transmembrane regions (helical) follow at residues 4-24 (WALT…GGIA) and 27-47 (AAGI…LSLV).

It belongs to the UPF0391 family.

It localises to the cell membrane. The chain is UPF0391 membrane protein Patl_4137 from Pseudoalteromonas atlantica (strain T6c / ATCC BAA-1087).